Consider the following 321-residue polypeptide: Fructose-1,6-bisphosphatase class 1 (321 aa).

Residues glutamate 93, aspartate 114, leucine 116, and aspartate 117 each coordinate Mg(2+). Substrate is bound by residues 117-120, asparagine 205, tyrosine 233, and lysine 263; that span reads DGSS. Glutamate 269 lines the Mg(2+) pocket.

This sequence belongs to the FBPase class 1 family. In terms of assembly, homotetramer. Mg(2+) is required as a cofactor.

The protein resides in the cytoplasm. It carries out the reaction beta-D-fructose 1,6-bisphosphate + H2O = beta-D-fructose 6-phosphate + phosphate. It participates in carbohydrate biosynthesis; gluconeogenesis. This chain is Fructose-1,6-bisphosphatase class 1, found in Persephonella marina (strain DSM 14350 / EX-H1).